Reading from the N-terminus, the 2703-residue chain is Serine/arginine repetitive matrix protein 2 (2703 aa).

Methionine 1 carries the post-translational modification N-acetylmethionine. A coiled-coil region spans residues 60–92 (HERKRRVELRCLELEEMMEEQGYEEQQIQEKVA). Lysine 101 carries the post-translational modification N6-acetyllysine. Glycyl lysine isopeptide (Lys-Gly) (interchain with G-Cter in SUMO2) cross-links involve residues lysine 108 and lysine 130. The interval 141–1007 (ISDSYVDGSS…SGSFHLCPGV (867 aa)) is disordered. Tyrosine 145 is modified (phosphotyrosine). Lysine 169 carries the post-translational modification N6-acetyllysine. Basic residues-rich tracts occupy residues 186–197 (KQKKKKKKKDRG) and 207–249 (RERK…KRSR). The interval 197–259 (GRRSESSSPR…STTPAPKSRR (63 aa)) is sufficient for RNA-binding. Phosphoserine is present on residues serine 220 and serine 222. Residues 263-284 (STSADSASSSDTSRSRSRSAAA) are compositionally biased toward low complexity. Phosphoserine is present on residues serine 295, serine 300, serine 310, serine 322, and serine 323. Over residues 319 to 334 (QQPSSPAPSTKQSSSP) the composition is skewed to low complexity. The segment covering 335 to 345 (YEDKDKKEKSA) has biased composition (basic and acidic residues). Serine 349, serine 351, serine 355, and serine 356 each carry phosphoserine. Phosphothreonine is present on residues threonine 357 and threonine 365. 20 positions are modified to phosphoserine: serine 375, serine 385, serine 393, serine 396, serine 402, serine 406, serine 422, serine 433, serine 434, serine 435, serine 438, serine 452, serine 482, serine 484, serine 503, serine 505, serine 507, serine 531, serine 533, and serine 540. The span at 383-396 (PSSQEPVNPSSEAS) shows a compositional bias: polar residues. A compositionally biased stretch (polar residues) spans 425–437 (PTKGSRHASSSPE). The segment covering 459–533 (NRSHGRAKRD…SPQRRGRSRS (75 aa)) has biased composition (basic residues). Positions 534–543 (PQRPGWSRSR) are enriched in low complexity. Basic residues-rich tracts occupy residues 544–561 (NTQRRGRSRSARRGRSHS), 568–721 (GRSR…RRGR), and 730–740 (NKSRTSQRRSR). A phosphoserine mark is found at serine 700, serine 702, and serine 704. Residues serine 773, serine 775, and serine 778 each carry the phosphoserine modification. The segment covering 785 to 817 (SQTPTRRSRSGSSPPKQKSKTPPRQSRSNSPQP) has biased composition (low complexity). A phosphoserine mark is found at serine 821 and serine 829. Composition is skewed to polar residues over residues 829 to 851 (SVTNMQADECTATPQRQSHSESS) and 859 to 874 (RTPSRQSCSGSSPRVK). Residues threonine 831 and threonine 841 each carry the phosphothreonine modification. A phosphoserine mark is found at serine 846, serine 850, and serine 851. Composition is skewed to low complexity over residues 875–891 (SSTPPRQSPSRSSSPQP) and 898–919 (SPRGRSHSSSSSPSPSRVTSRT). Residues serine 882, serine 909, serine 924, serine 926, serine 928, serine 940, serine 942, serine 944, serine 945, serine 946, and serine 949 each carry the phosphoserine modification. A Phosphothreonine modification is found at threonine 955. Positions 960–1000 (SGSTSPYLKSMLQTPPDQNLSGSKSPCPQKSRDSPTGSSGS) are enriched in polar residues. Phosphoserine is present on residues serine 962 and serine 964. At tyrosine 966 the chain carries Phosphotyrosine. Threonine 973 carries the post-translational modification Phosphothreonine. Phosphoserine is present on residues serine 980, serine 984, and serine 993. Threonine 995 carries the post-translational modification Phosphothreonine. Residues serine 997, serine 1000, serine 1011, serine 1037, and serine 1038 each carry the phosphoserine modification. Residues 1024–1057 (VQQKGHTQTWPDTSSPEVMQTQVESPLLQSKSQT) show a composition bias toward polar residues. Residues 1024 to 1112 (VQQKGHTQTW…TKPDSSIYPL (89 aa)) form a disordered region. The residue at position 1044 (threonine 1044) is a Phosphothreonine. Residues serine 1048, serine 1064, serine 1066, serine 1067, and serine 1068 each carry the phosphoserine modification. A compositionally biased stretch (low complexity) spans 1058–1068 (SPKGSLSRSSS). Residue threonine 1071 is modified to Phosphothreonine. 27 positions are modified to phosphoserine: serine 1077, serine 1087, serine 1094, serine 1097, serine 1117, serine 1151, serine 1159, serine 1175, serine 1188, serine 1216, serine 1225, serine 1229, serine 1230, serine 1269, serine 1276, serine 1278, serine 1284, serine 1287, serine 1294, serine 1305, serine 1325, serine 1338, serine 1339, serine 1340, serine 1343, serine 1359, and serine 1360. Basic and acidic residues predominate over residues 1079-1092 (VKQDKSEISTDPKL). A disordered region spans residues 1136–2092 (IQEDVASSCI…RSPGMLEPLG (957 aa)). Positions 1146-1158 (PRDKFSPTQDRPE) are enriched in basic and acidic residues. Positions 1270 to 1284 (PEHKELSHSPPRENS) are enriched in basic and acidic residues. Positions 1285 to 1304 (FESSLEFKNSGPVSEVNTGF) are enriched in polar residues. Threonine 1370 is subject to Phosphothreonine. A compositionally biased stretch (basic and acidic residues) spans 1371–1387 (PSRERSSSASPELKDGL). Phosphoserine is present on residues serine 1372, serine 1378, and serine 1380. Threonine 1390 is modified (phosphothreonine). The segment covering 1397–1408 (SGSSPGLRDGSG) has biased composition (low complexity). Phosphoserine occurs at positions 1400 and 1407. Residue threonine 1409 is modified to Phosphothreonine. Over residues 1409–1431 (TPSRHSLSGSSPGMKDTPQTPSR) the composition is skewed to polar residues. 4 positions are modified to phosphoserine: serine 1414, serine 1416, serine 1418, and serine 1419. Residue threonine 1428 is modified to Phosphothreonine. Phosphoserine is present on residues serine 1438 and serine 1439. Threonine 1448 bears the Phosphothreonine mark. Serine 1453, serine 1455, serine 1457, serine 1458, and serine 1465 each carry phosphoserine. The segment covering 1454 to 1468 (HSPSSPERNNKSVTP) has biased composition (polar residues). Threonine 1467 carries the phosphothreonine modification. 4 positions are modified to phosphoserine: serine 1473, serine 1475, serine 1477, and serine 1478. Over residues 1475–1489 (SESSVEQKNLARTSP) the composition is skewed to polar residues. Threonine 1487 carries the post-translational modification Phosphothreonine. Over residues 1490 to 1499 (GQRSRSGSSQ) the composition is skewed to low complexity. 5 positions are modified to phosphoserine: serine 1493, serine 1495, serine 1497, serine 1498, and serine 1508. Basic and acidic residues predominate over residues 1511–1523 (ERSESDSSPDSKP). Residues 1524–1533 (KTRTPLRQRS) are compositionally biased toward basic residues. Serine 1533, serine 1535, serine 1537, serine 1538, serine 1554, serine 1556, serine 1557, serine 1572, serine 1576, serine 1577, serine 1604, serine 1614, serine 1647, serine 1649, and serine 1650 each carry phosphoserine. Low complexity predominate over residues 1604–1613 (SPEGSSSSES). Residues 1637 to 1647 (KSHTPPRRRSS) are compositionally biased toward basic residues. Threonine 1654 is modified (phosphothreonine). Phosphoserine occurs at positions 1683, 1685, 1687, 1688, 1718, and 1720. Composition is skewed to basic residues over residues 1725-1745 (GLQRSRSRSRREKTRTTRRRD) and 1754-1772 (SRRRQRSRSRSRVTRRRRG). A phosphoserine mark is found at serine 1774, serine 1778, serine 1810, serine 1813, serine 1832, and serine 1834. Residues 1776 to 1789 (YHSRSPTRQESSRT) show a composition bias toward low complexity. Over residues 1790–1810 (SSRRRRGRSRTPLTSRKRSRS) the composition is skewed to basic residues. Residues 1818-2020 (KRSRSRASPA…PRAARGKRSL (203 aa)) are compositionally biased toward basic residues. Phosphothreonine is present on threonine 1836. A phosphoserine mark is found at serine 1840 and serine 1846. Position 1848 is a phosphothreonine (threonine 1848). Residues serine 1849, serine 1869, serine 1872, serine 1876, and serine 1878 each carry the phosphoserine modification. Phosphothreonine occurs at positions 1880 and 1884. Serine 1898 and serine 1900 each carry phosphoserine. 2 positions are modified to phosphothreonine: threonine 1902 and threonine 1906. Residues serine 1910 and serine 1912 each carry the phosphoserine modification. Phosphothreonine occurs at positions 1914 and 1918. Serine 1922, serine 1924, and serine 1927 each carry phosphoserine. Phosphothreonine is present on threonine 1930. 8 positions are modified to phosphoserine: serine 1936, serine 1939, serine 1948, serine 1951, serine 1960, serine 1963, serine 1970, and serine 1972. The residue at position 1974 (threonine 1974) is a Phosphothreonine. Phosphoserine is present on residues serine 1982 and serine 1984. Threonine 1986 is modified (phosphothreonine). Phosphoserine is present on residues serine 1994, serine 1996, serine 1998, and serine 2019. Threonine 2021 carries the post-translational modification Phosphothreonine. The segment covering 2022–2047 (RSPPAIRRRSASGSSSDRSRSATPPA) has biased composition (low complexity). Serine 2023 and serine 2042 each carry phosphoserine. Phosphothreonine is present on threonine 2044. A phosphoserine mark is found at serine 2052 and serine 2054. Threonine 2056 is modified (phosphothreonine). Low complexity predominate over residues 2062–2076 (SSSRMSCFSRPSMSP). Phosphoserine occurs at positions 2070, 2073, 2075, and 2084. Phosphothreonine is present on threonine 2096. Residues arginine 2146, arginine 2159, arginine 2183, and arginine 2198 each carry the omega-N-methylarginine modification. Phosphoserine is present on serine 2224. Omega-N-methylarginine occurs at positions 2226 and 2240. Residues threonine 2241 and threonine 2254 each carry the phosphothreonine modification. Serine 2262 is subject to Phosphoserine. The interval 2263 to 2703 (LTGSGTPPTA…SNRHRSSRSP (441 aa)) is disordered. 2 positions are modified to phosphothreonine: threonine 2268 and threonine 2281. Residues 2269-2283 (PPTAANYPSSSRTPQ) are compositionally biased toward polar residues. An Omega-N-methylarginine modification is found at arginine 2295. Serine 2296, serine 2321, and serine 2329 each carry phosphoserine. Threonine 2334 is modified (phosphothreonine). At serine 2335 the chain carries Phosphoserine. Arginine 2337 carries the asymmetric dimethylarginine; alternate modification. Arginine 2337 carries the post-translational modification Omega-N-methylarginine; alternate. Serine 2347, serine 2351, and serine 2360 each carry phosphoserine. Phosphothreonine is present on threonine 2362. Residues serine 2365, serine 2368, serine 2381, serine 2384, serine 2404, and serine 2408 each carry the phosphoserine modification. Polar residues-rich tracts occupy residues 2410 to 2443 (FSDQSRSVVQTTPVAGSQSLSSGTVAKSTSSASD) and 2467 to 2476 (TGAQQPSTLA). The segment covering 2487–2521 (SSSSSSSSSSSSSSSSSSSSSSSSGSSSSDSEGSS) has biased composition (low complexity). A Phosphoserine modification is found at serine 2535. Threonine 2537 bears the Phosphothreonine mark. Lysine 2541 is covalently cross-linked (Glycyl lysine isopeptide (Lys-Gly) (interchain with G-Cter in SUMO2)). Threonine 2553 is subject to Phosphothreonine. The segment covering 2562-2602 (SSSSSSSSSSSSSSSSSSSSSSSSSSSSSSSSSSSSSSSSS) has biased composition (low complexity). Over residues 2605–2622 (PAKPGPQALPKPASPKKP) the composition is skewed to pro residues. Serine 2618, serine 2629, serine 2631, serine 2638, serine 2642, serine 2644, serine 2646, serine 2648, serine 2656, and serine 2660 each carry phosphoserine. Residues 2623–2643 (PPGERRSRSPRKPIDSLRDSR) are compositionally biased toward basic and acidic residues. Threonine 2689 bears the Phosphothreonine mark. At serine 2691 the chain carries Phosphoserine. Residues 2694–2703 (SNRHRSSRSP) are compositionally biased toward basic residues.

Belongs to the CWC21 family. As to quaternary structure, component of pre-catalytic, catalytic and post-catalytic spliceosome complexes. Found in a pre-mRNA splicing complex with SFRS4, SFRS5, SNRP70, SNRPA1, SRRM1 and SRRM2. Component of the minor spliceosome, which splices U12-type introns. Interacts with DHX8. Interacts with CACTIN.

The protein resides in the nucleus. It is found in the nucleus speckle. Required for pre-mRNA splicing as component of the spliceosome. As a component of the minor spliceosome, involved in the splicing of U12-type introns in pre-mRNAs. In Mus musculus (Mouse), this protein is Serine/arginine repetitive matrix protein 2 (Srrm2).